The chain runs to 280 residues: Nuclear egress protein 1 (280 aa).

The CCCH-type zinc-finger motif lies at 86–203 (CLTLSPYGHS…YIIFTSLTLH (118 aa)).

Belongs to the herpesviridae NEC1 protein family. In terms of assembly, forms a heterohexameric complex with NEC2. Interacts with capsid vertex specific component 2/CVC2; this interaction directs the capsid to the host inner nuclear membrane to initiate budding. In terms of processing, phosphorylated at serine residues in the N-terminus. This phosphorylation regulates the localization within the inner nuclear membrane.

It localises to the host nucleus inner membrane. Its function is as follows. Plays an essential role in virion nuclear egress, the first step of virion release from infected cell. Within the host nucleus, NEC1 interacts with the newly formed capsid through the vertexes and directs it to the inner nuclear membrane by associating with NEC2. Induces the budding of the capsid at the inner nuclear membrane as well as its envelopment into the perinuclear space. There, the NEC1/NEC2 complex promotes the fusion of the enveloped capsid with the outer nuclear membrane and the subsequent release of the viral capsid into the cytoplasm where it will reach the secondary budding sites in the host Golgi or trans-Golgi network. This chain is Nuclear egress protein 1, found in Alcelaphine herpesvirus 1 (strain C500) (AlHV-1).